A 99-amino-acid polypeptide reads, in one-letter code: Class II hydrophobin B (99 aa).

An N-terminal signal peptide occupies residues 1-15 (MKFFAIAALFAGALA). Disulfide bonds link cysteine 30–cysteine 79 and cysteine 40–cysteine 70.

The protein belongs to the cerato-ulmin hydrophobin family.

The protein resides in the secreted. It localises to the cell wall. The protein localises to the vacuole. It is found in the cytoplasmic vesicle. In terms of biological role, aerial growth, conidiation, and dispersal of filamentous fungi in the environment rely upon a capability of their secreting small amphipathic proteins called hydrophobins (HPBs) with low sequence identity. Class I can self-assemble into an outermost layer of rodlet bundles on aerial cell surfaces, conferring cellular hydrophobicity that supports fungal growth, development and dispersal; whereas Class II form highly ordered films at water-air interfaces through intermolecular interactions but contribute nothing to the rodlet structure. Hyd2B contributes to certain cell wall-related features, such as hydrophobicity but is not involved in cell wall-related events during fungal proliferation in host hemocoel. Does not contribute to conidial hydrophobicity. Involved in insect hemocoel colonization independent of cell hydrophobicity. The protein is Class II hydrophobin B of Beauveria bassiana (strain ARSEF 2860) (White muscardine disease fungus).